The chain runs to 210 residues: Troponin I, cardiac muscle (210 aa).

The interval 1 to 43 (MADGSSDAAREPRPAPAPIRRRSSNYRAYATEPHAKKKSKISA) is disordered. At Ala2 the chain carries N-acetylalanine. A phosphoserine mark is found at Ser5 and Ser6. Phosphoserine; by PKA and PKD/PRKD1 occurs at positions 23 and 24. Tyr26 carries the phosphotyrosine modification. Thr31 is modified (phosphothreonine; by STK4/MST1). The segment at 32–79 (EPHAKKKSKISASRKLQLKTLLLQIAKQELEREAEERRGEKGRALSTR) is involved in binding TNC. 2 positions are modified to phosphoserine; by PKC/PRKCE: Ser42 and Ser44. The residue at position 51 (Thr51) is a Phosphothreonine; by STK4/MST1. Ser77 is subject to Phosphoserine. Residue Thr78 is modified to Phosphothreonine. Residues Thr129 and Thr143 each carry the phosphothreonine; by STK4/MST1 modification. The interval 129 to 149 (TQKIFDLRGKFKRPTLRRVRI) is involved in binding TNC and actin. Ser150 is modified (phosphoserine; by PAK3). A Phosphoserine modification is found at Ser166. The residue at position 181 (Thr181) is a Phosphothreonine. At Ser199 the chain carries Phosphoserine.

Belongs to the troponin I family. Binds to actin and tropomyosin. Interacts with TRIM63. Interacts with STK4/MST1. In terms of processing, phosphorylated at Ser-42 and Ser-44 by PRKCE; phosphorylation increases myocardium contractile dysfunction. Phosphorylated at Ser-23 and Ser-24 by PRKD1; phosphorylation reduces myofilament calcium sensitivity. Phosphorylated preferentially at Thr-31. Phosphorylation by STK4/MST1 alters its binding affinity to TNNC1 (cardiac Tn-C) and TNNT2 (cardiac Tn-T).

Functionally, troponin I is the inhibitory subunit of troponin, the thin filament regulatory complex which confers calcium-sensitivity to striated muscle actomyosin ATPase activity. In Homo sapiens (Human), this protein is Troponin I, cardiac muscle (TNNI3).